A 426-amino-acid polypeptide reads, in one-letter code: Melibiose/raffinose/stachyose-binding protein MelE (426 aa).

The first 18 residues, 1–18 (MKHTFVLFLSLILLVLPG), serve as a signal peptide directing secretion. Cys19 is lipidated: N-palmitoyl cysteine. The S-diacylglycerol cysteine moiety is linked to residue Cys19.

Belongs to the bacterial solute-binding protein 1 family. As to quaternary structure, the complex is composed of two ATP-binding proteins (MsmX), two transmembrane proteins (MelC and MelD) and a solute-binding protein (MelE).

Its subcellular location is the cell membrane. In terms of biological role, part of the ABC transporter complex MelEDC-MsmX involved in melibiose, raffinose and stachyose import. Binds melibiose, raffinose and stachyose. This Bacillus subtilis (strain 168) protein is Melibiose/raffinose/stachyose-binding protein MelE.